A 244-amino-acid chain; its full sequence is Flavin-dependent thymidylate synthase (244 aa).

Residues 7 to 199 (PRVFLIASWG…PNLARLVWED (193 aa)) enclose the ThyX domain. FAD is bound by residues Ser60 and 83 to 85 (RHR). DUMP contacts are provided by residues 80–83 (QFIR), 93–95 (SQR), and Arg137. The ThyX motif motif lies at 83–93 (RHRMASYWSES). FAD is bound by residues 153-155 (NAR) and Asn160. Position 165 (Arg165) interacts with dUMP. Arg165 (involved in ionization of N3 of dUMP, leading to its activation) is an active-site residue.

It belongs to the thymidylate synthase ThyX family. In terms of assembly, homotetramer. It depends on FAD as a cofactor.

It catalyses the reaction dUMP + (6R)-5,10-methylene-5,6,7,8-tetrahydrofolate + NADPH + H(+) = dTMP + (6S)-5,6,7,8-tetrahydrofolate + NADP(+). It participates in pyrimidine metabolism; dTTP biosynthesis. Catalyzes the reductive methylation of 2'-deoxyuridine-5'-monophosphate (dUMP) to 2'-deoxythymidine-5'-monophosphate (dTMP) while utilizing 5,10-methylenetetrahydrofolate (mTHF) as the methyl donor, and NADPH and FADH(2) as the reductant. The chain is Flavin-dependent thymidylate synthase from Pyrobaculum aerophilum (strain ATCC 51768 / DSM 7523 / JCM 9630 / CIP 104966 / NBRC 100827 / IM2).